A 153-amino-acid chain; its full sequence is ORM1-like protein 2 (153 aa).

Over 1–21 (MNVGVAHSEVNPNTRVMNSRG) the chain is Cytoplasmic. The next 2 membrane-spanning stretches (helical) occupy residues 22–42 (IWLA…SIPF) and 43–63 (FSIP…TYVF). At 64 to 105 (LHTVKGTPFETPDQGKARLLTHWEQMDYGLQFTSSRKFLSIS) the chain is on the cytoplasmic side. A helical membrane pass occupies residues 106-126 (PIVLYLLASFYTKYDAAHFLI). The Extracellular portion of the chain corresponds to 127 to 153 (NTASLLSVLLPKLPQFHGVRVFGINKY).

It belongs to the ORM family. As to quaternary structure, ceramide-sensitive subunit of the serine palmitoyltransferase (SPT) complex, which is also composed of SPTLC1, SPTLC2/3 and SPTSSA/B. As to expression, widely expressed. Expressed in adult and fetal heart, brain, lung, liver, skeletal muscle and kidney. Expressed in adult pancreas and placenta and in fetal spleen abd thymus.

The protein localises to the endoplasmic reticulum membrane. In terms of biological role, plays an essential role in the homeostatic regulation of sphingolipid de novo biosynthesis by modulating the activity of the serine palmitoyltransferase (SPT) in response to ceramide levels. When complexed to SPT, the binding of ceramides to its N-terminus stabilizes a conformation that block SPT substrate entry, hence preventing SPT catalytic activity. Through this mechanism, maintains ceramide levels at sufficient concentrations for the production of complex sphingolipids, but which prevents the accumulation of ceramides to levels that trigger apoptosis. This Homo sapiens (Human) protein is ORM1-like protein 2 (ORMDL2).